The following is a 67-amino-acid chain: Large ribosomal subunit protein uL29 (67 aa).

Belongs to the universal ribosomal protein uL29 family.

The protein is Large ribosomal subunit protein uL29 of Zymomonas mobilis subsp. mobilis (strain ATCC 31821 / ZM4 / CP4).